A 72-amino-acid polypeptide reads, in one-letter code: uncharacterized protein (72 aa).

Residues M1 to A22 form the signal peptide. The Extracellular segment spans residues S23–M28. Residues T29–F49 traverse the membrane as a helical segment. Residues S50–C72 lie on the Cytoplasmic side of the membrane.

Its subcellular location is the membrane. This is an uncharacterized protein from Dictyostelium discoideum (Social amoeba).